The primary structure comprises 110 residues: Endoribonuclease SymE (110 aa).

The region spanning Ser29–Pro74 is the SpoVT-AbrB domain.

Belongs to the SymE family.

The protein resides in the cytoplasm. Involved in the degradation and recycling of damaged RNA. It is itself a target for degradation by the ATP-dependent protease Lon. The chain is Endoribonuclease SymE from Salmonella paratyphi C (strain RKS4594).